Here is a 669-residue protein sequence, read N- to C-terminus: Leucine zipper putative tumor suppressor 2 (669 aa).

A compositionally biased stretch (low complexity) spans Met-1–Val-25. Disordered stretches follow at residues Met-1–Phe-56, Asn-92–Ser-131, Pro-150–Lys-201, and Gly-215–Ala-323. Residues Met-1 to Lys-332 are required for centrosomal localization. The segment covering Leu-172–Gln-181 has biased composition (polar residues). Over residues Ala-187–Ala-199 the composition is skewed to low complexity. A compositionally biased stretch (polar residues) spans Gly-215–Thr-233. Low complexity-rich tracts occupy residues Ser-241–Gly-251 and Gly-267–Gly-283. Ser-249 is modified (phosphoserine). Residues Ser-284–Gly-295 are compositionally biased toward gly residues. A Phosphoserine modification is found at Ser-296. Residues Thr-298–Gly-308 are compositionally biased toward polar residues. Over residues Ser-311–Ser-320 the composition is skewed to pro residues. Residues Val-328–Asp-649 are a coiled coil. The interval Ser-447–Ile-669 is sufficient for interaction with CTNNB1. The tract at residues Ile-450 to Ile-669 is sufficient for interaction with KATNB1 and for inhibition of katanin-mediated microtubule severing. At Ser-570 the chain carries Phosphoserine. A Nuclear export signal motif is present at residues Leu-631–Leu-640.

It belongs to the LZTS2 family. In terms of assembly, interacts with KATNB1. Also interacts with CTNNB1, gamma-tubulin and KIF23. As to expression, highly expressed in prostate and testis, and at slightly lower levels in spleen, thymus, uterus, small intestine and colon.

The protein resides in the cytoplasm. It localises to the cytoskeleton. Its subcellular location is the microtubule organizing center. The protein localises to the centrosome. Negative regulator of katanin-mediated microtubule severing and release from the centrosome. Required for central spindle formation and the completion of cytokinesis. May negatively regulate axonal outgrowth by preventing the formation of microtubule bundles that are necessary for transport within the elongating axon. Negative regulator of the Wnt signaling pathway. Represses beta-catenin-mediated transcriptional activation by promoting the nuclear exclusion of beta-catenin. The sequence is that of Leucine zipper putative tumor suppressor 2 from Homo sapiens (Human).